A 546-amino-acid chain; its full sequence is MAGGVDGPIGIPFPDHSSDILSSLNEQRNNGLLCDVVILVEGQEFPTHRSVLAACSQYFKKLFTSGLVVDQQNVYEIDFVSADALSALLEFAYTATLTVSTSNVNDILNAAKLLEIPAVRDVCTDLLDRKILAKNDQMDLVDQIDQRNHLRAKEYLEFFQSNPVNGHQGSFPWTNPELRDLQRLNFRGQEDEEEPDCNGLDFYSQAPLNERPKANDCDPDSNPAMWLDREEEEAAAAPGSLFSPSQNGHYSGRGLGTPGEEEGAPGAALDQQDAGDSPSFVPTGAEAEDDARDVDGLAASVLQQVMGSVGRQQLGDDERKDDDGVVDYYLKYFGSSNESDVYPSWSQKVEKKIRAKAFQKCPICAKVIQGAGKLPRHIRTHTGEKPYECNICNVRFTRQDKLKVHMRKHTGEKPYLCQQCGAAFAHNYDLKNHMRVHTGLRPYQCDSCFKTFVRSDHLHRHLKKDGCNGIPSRRGRRPRVRDAGGLPTPTGNPEDGGFQGGGESQESEDTVQGNGREQHFEESSTAEAAGLNVAGGAAEGSAPGPS.

One can recognise a BTB domain in the interval 34–101 (CDVVILVEGQ…AYTATLTVST (68 aa)). The tract at residues 189–288 (QEDEEEPDCN…SFVPTGAEAE (100 aa)) is disordered. 3 consecutive C2H2-type zinc fingers follow at residues 359–381 (QKCP…IRTH), 387–409 (YECN…MRKH), and 415–437 (YLCQ…MRVH). The C2H2-type 4; atypical zinc-finger motif lies at 443–467 (YQCDSCFKTFVRSDHLHRHLKKDGC). The interval 463–546 (KKDGCNGIPS…AAEGSAPGPS (84 aa)) is disordered. Residues 534-546 (AGGAAEGSAPGPS) are compositionally biased toward low complexity.

Its subcellular location is the nucleus. Its function is as follows. Transcription factor that represses the transcription of a wide range of genes involved in cell proliferation and differentiation. Directly and specifically binds to the consensus sequence 5'-[GA][CA]GACCCCCCCCC-3' and represses transcription both by regulating the organization of chromatin and through the direct recruitment of transcription factors to gene regulatory regions. May also play a role, independently of its transcriptional activity, in double-strand break repair via classical non-homologous end joining/cNHEJ and in alternative splicing. This Gallus gallus (Chicken) protein is Zinc finger and BTB domain-containing protein 7A.